A 391-amino-acid chain; its full sequence is Formate-dependent phosphoribosylglycinamide formyltransferase (391 aa).

N(1)-(5-phospho-beta-D-ribosyl)glycinamide is bound by residues 20 to 21 (EL) and Glu80. ATP contacts are provided by residues Arg112, Lys153, 158 to 163 (SSGKGQ), 193 to 196 (EGFV), and Glu201. The ATP-grasp domain maps to 117-306 (RLAAETLGLP…EFALHVRAIL (190 aa)). The Mg(2+) site is built by Glu265 and Glu277. N(1)-(5-phospho-beta-D-ribosyl)glycinamide is bound by residues Asp284, Lys354, and 361 to 362 (RR).

The protein belongs to the PurK/PurT family. In terms of assembly, homodimer.

The catalysed reaction is N(1)-(5-phospho-beta-D-ribosyl)glycinamide + formate + ATP = N(2)-formyl-N(1)-(5-phospho-beta-D-ribosyl)glycinamide + ADP + phosphate + H(+). Its pathway is purine metabolism; IMP biosynthesis via de novo pathway; N(2)-formyl-N(1)-(5-phospho-D-ribosyl)glycinamide from N(1)-(5-phospho-D-ribosyl)glycinamide (formate route): step 1/1. Its function is as follows. Involved in the de novo purine biosynthesis. Catalyzes the transfer of formate to 5-phospho-ribosyl-glycinamide (GAR), producing 5-phospho-ribosyl-N-formylglycinamide (FGAR). Formate is provided by PurU via hydrolysis of 10-formyl-tetrahydrofolate. This chain is Formate-dependent phosphoribosylglycinamide formyltransferase, found in Shewanella putrefaciens (strain CN-32 / ATCC BAA-453).